A 253-amino-acid chain; its full sequence is uncharacterized protein (253 aa).

This is an uncharacterized protein from Caenorhabditis elegans.